The primary structure comprises 89 residues: Small ribosomal subunit protein uS15 (89 aa).

It belongs to the universal ribosomal protein uS15 family. In terms of assembly, part of the 30S ribosomal subunit. Forms a bridge to the 50S subunit in the 70S ribosome, contacting the 23S rRNA.

Functionally, one of the primary rRNA binding proteins, it binds directly to 16S rRNA where it helps nucleate assembly of the platform of the 30S subunit by binding and bridging several RNA helices of the 16S rRNA. In terms of biological role, forms an intersubunit bridge (bridge B4) with the 23S rRNA of the 50S subunit in the ribosome. The sequence is that of Small ribosomal subunit protein uS15 from Gloeobacter violaceus (strain ATCC 29082 / PCC 7421).